The following is a 453-amino-acid chain: Ribulose bisphosphate carboxylase large chain (453 aa).

A propeptide spanning residues 1-2 (MS) is cleaved from the precursor. At Pro-3 the chain carries N-acetylproline. Lys-14 carries the N6,N6,N6-trimethyllysine modification. Residues Asn-123 and Thr-173 each contribute to the substrate site. Catalysis depends on Lys-175, which acts as the Proton acceptor. Lys-177 provides a ligand contact to substrate. 3 residues coordinate Mg(2+): Lys-201, Asp-203, and Glu-204. Lys-201 is modified (N6-carboxylysine). His-294 acts as the Proton acceptor in catalysis. Substrate-binding residues include Arg-295, His-327, and Ser-379.

It belongs to the RuBisCO large chain family. Type I subfamily. In terms of assembly, heterohexadecamer of 8 large chains and 8 small chains; disulfide-linked. The disulfide link is formed within the large subunit homodimers. It depends on Mg(2+) as a cofactor. In terms of processing, the disulfide bond which can form in the large chain dimeric partners within the hexadecamer appears to be associated with oxidative stress and protein turnover.

It localises to the plastid. It is found in the chloroplast. The enzyme catalyses 2 (2R)-3-phosphoglycerate + 2 H(+) = D-ribulose 1,5-bisphosphate + CO2 + H2O. The catalysed reaction is D-ribulose 1,5-bisphosphate + O2 = 2-phosphoglycolate + (2R)-3-phosphoglycerate + 2 H(+). RuBisCO catalyzes two reactions: the carboxylation of D-ribulose 1,5-bisphosphate, the primary event in carbon dioxide fixation, as well as the oxidative fragmentation of the pentose substrate in the photorespiration process. Both reactions occur simultaneously and in competition at the same active site. In Valantia muralis (Wall valantia), this protein is Ribulose bisphosphate carboxylase large chain.